Consider the following 263-residue polypeptide: MGLFHSIFSLPSTINDSIEKQIYMPPYIPRFYYESLNTNYSKIFTRTSSNGDDIPIVQIRPKNNPFPQKYIVFSHGNGCDVYSVFSYLTNLSDKLDVGIITYDYVGYGLSRDNIPTEQGCYDSIEVAVDFLLNDYGLDPKNIYLFGQSLGTGITIDYAHKNNWNSPIILVSPYKSICTVVVDSCIVRPIDKFCTLNKIYQIKCPVKIFHGENDNVINITHGKKIYDSLNDKSLEPVWIPNTGHNDILDKITIQQIREVIDYFD.

A lipid anchor (N-myristoyl glycine; by host) is attached at glycine 2.

Belongs to the AB hydrolase superfamily.

The polypeptide is Putative alpha/beta hydrolase L404 (Acanthamoeba polyphaga (Amoeba)).